The sequence spans 471 residues: Adenosylhomocysteinase (471 aa).

Positions 60, 135, and 196 each coordinate substrate. Thr197–Thr199 contacts NAD(+). Residues Lys226 and Asp230 each contribute to the substrate site. NAD(+) contacts are provided by residues Asn231, Gly260 to Gly265, Glu283, Asn318, Ile339 to His341, and Asn387.

This sequence belongs to the adenosylhomocysteinase family. Requires NAD(+) as cofactor.

The protein localises to the cytoplasm. It carries out the reaction S-adenosyl-L-homocysteine + H2O = L-homocysteine + adenosine. It functions in the pathway amino-acid biosynthesis; L-homocysteine biosynthesis; L-homocysteine from S-adenosyl-L-homocysteine: step 1/1. May play a key role in the regulation of the intracellular concentration of adenosylhomocysteine. The sequence is that of Adenosylhomocysteinase from Chlorobium limicola (strain DSM 245 / NBRC 103803 / 6330).